A 292-amino-acid chain; its full sequence is 5,10-methylenetetrahydrofolate reductase (292 aa).

Glutamate 28 acts as the Proton donor/acceptor in catalysis. Threonine 59 provides a ligand contact to NADH. FAD is bound by residues tyrosine 60, alanine 62, histidine 88, arginine 118, glycine 119, aspartate 120, alanine 132, tyrosine 152, histidine 156, aspartate 165, asparagine 168, lysine 171, and lysine 172. Residue aspartate 120 coordinates (6S)-5-methyl-5,6,7,8-tetrahydrofolate. Position 183 (glutamine 183) interacts with NADH. Residues glutamine 183, glutamine 219, and lysine 279 each coordinate (6S)-5-methyl-5,6,7,8-tetrahydrofolate.

It belongs to the methylenetetrahydrofolate reductase family. FAD is required as a cofactor.

It catalyses the reaction (6S)-5-methyl-5,6,7,8-tetrahydrofolate + NAD(+) = (6R)-5,10-methylene-5,6,7,8-tetrahydrofolate + NADH + H(+). It participates in one-carbon metabolism; tetrahydrofolate interconversion. The protein operates within amino-acid biosynthesis; L-methionine biosynthesis via de novo pathway. Its function is as follows. Catalyzes the NADH-dependent reduction of 5,10-methylenetetrahydrofolate to 5-methyltetrahydrofolate. Is required to provide the methyl group necessary for methionine synthetase to convert homocysteine to methionine; the methyl group is given by 5-methyltetrahydrofolate. This is 5,10-methylenetetrahydrofolate reductase (metF) from Buchnera aphidicola subsp. Schizaphis graminum (strain Sg).